The sequence spans 730 residues: Elongation factor 2 (730 aa).

In terms of domain architecture, tr-type G spans 19 to 260; the sequence is DRIRNIGIVA…MVVKHLPNPL (242 aa). Residues 28–35, 94–98, and 148–151 each bind GTP; these read AHIDHGKT, DTPGH, and NKVD. Residue H597 is modified to Diphthamide.

The protein belongs to the TRAFAC class translation factor GTPase superfamily. Classic translation factor GTPase family. EF-G/EF-2 subfamily.

The protein localises to the cytoplasm. In terms of biological role, catalyzes the GTP-dependent ribosomal translocation step during translation elongation. During this step, the ribosome changes from the pre-translocational (PRE) to the post-translocational (POST) state as the newly formed A-site-bound peptidyl-tRNA and P-site-bound deacylated tRNA move to the P and E sites, respectively. Catalyzes the coordinated movement of the two tRNA molecules, the mRNA and conformational changes in the ribosome. The protein is Elongation factor 2 of Methanoculleus marisnigri (strain ATCC 35101 / DSM 1498 / JR1).